A 513-amino-acid chain; its full sequence is Sodium/potassium/calcium exchanger 5 (513 aa).

The first 35 residues, 1–35 (MRTDVFLQRRKRRDVLLSIIALLLLIFAIVHLVFC), serve as a signal peptide directing secretion. Residues 36–78 (AGLSFQGSSSARVRRDLENASECVQPQSSEFPEGFFTVQERKD) are Extracellular-facing. A helical membrane pass occupies residues 79 to 99 (GGILIYFMIIFYMLLSVSIVC). The Cytoplasmic portion of the chain corresponds to 100 to 123 (DEYFLPSLEVISERLGLSQDVAGA). A helical membrane pass occupies residues 124–144 (TFMAAGSSAPELVTAFLGVFV). Over 145 to 148 (TKGD) the chain is Extracellular. The chain crosses the membrane as a helical span at residues 149–169 (IGVSTIMGSAVYNLLCICAAC). The Cytoplasmic segment spans residues 170–181 (GLLSSAVGRLSC). A helical transmembrane segment spans residues 182–202 (WPLFRDCVAYAISVAAVIAII). The Extracellular portion of the chain corresponds to 203–207 (SDNRV). Residues 208–228 (YWYDGACLLLVYGVYVAVLCF) traverse the membrane as a helical segment. Over 229-315 (DLRISEYVMQ…KSVFSMPDHD (87 aa)) the chain is Cytoplasmic. A helical transmembrane segment spans residues 316–336 (LKRILWVLSLPVSTLLFVSVP). Topologically, residues 337-350 (DCRRPFWKNFYMLT) are extracellular. Residues 351–371 (FLMSAVWISAFTYVLVWMVTI) form a helical membrane-spanning segment. At 372–381 (VGETLGIPDT) the chain is on the cytoplasmic side. Residues 382–402 (VMGMTLLAAGTSIPDTVASVM) traverse the membrane as a helical segment. Residues 403-420 (VAREGKSDMAMSNIVGSN) lie on the Extracellular side of the membrane. Residues 421 to 441 (VFDMLCLGLPWFIQTVFVDVG) traverse the membrane as a helical segment. Residues 442–450 (SPVEVNSSG) lie on the Cytoplasmic side of the membrane. Residues 451–471 (LVFMSCTLLLSIIFLFLAVHI) traverse the membrane as a helical segment. Topologically, residues 472 to 482 (NGWKLDWKLGL) are extracellular. The helical transmembrane segment at 483-503 (VCLACYILFATLSILYELGII) threads the bilayer. The Cytoplasmic portion of the chain corresponds to 504-513 (GNNPIRSCSD).

It belongs to the Ca(2+):cation antiporter (CaCA) (TC 2.A.19) family. SLC24A subfamily. In terms of tissue distribution, highly expressed in melanin-producing cells. Colocalizes with melanin biosynthesis marker dct.

The protein resides in the golgi apparatus. It is found in the trans-Golgi network membrane. The protein localises to the melanosome. It catalyses the reaction Ca(2+)(out) + K(+)(out) + 4 Na(+)(in) = Ca(2+)(in) + K(+)(in) + 4 Na(+)(out). Its function is as follows. Calcium, potassium:sodium antiporter that transports 1 Ca(2+) and 1 K(+) to the melanosome in exchange for 4 cytoplasmic Na(+). Involved in pigmentation, possibly by participating in ion transport in melanosomes. Predominant sodium-calcium exchanger in melanocytes. This chain is Sodium/potassium/calcium exchanger 5 (slc24a5), found in Danio rerio (Zebrafish).